Consider the following 175-residue polypeptide: Chromobox protein homolog hpl-2 (175 aa).

A Chromo domain is found at 19-78 (FMVEKVLDKRTGKAGRDEFLIQWQGFPESDSSWEPRENLQCVEMLDEFEREFSKREKPIR). Residues 71 to 109 (SKREKPIRKRHSQKPEPSEDQADPEEDKDEKKETNQNDK) form a disordered region. A compositionally biased stretch (acidic residues) spans 88–98 (SEDQADPEEDK). A compositionally biased stretch (basic and acidic residues) spans 99 to 109 (DEKKETNQNDK). One can recognise a Chromo 2; shadow subtype domain in the interval 115–172 (KQLKCIVGLTKGPGELHFLCKFSDDTARLLPAKEVNSRYPSQVIRYYESKLTIQDPKA).

As to quaternary structure, interacts with histone H3 when di-, or tri-methylated at 'Lys-27' (H3K27me2/me3), or tri-methylated at 'Lys-9' (H3K9me3). Interacts with Tar DNA-binding protein homolog tdp-1; interaction may maintain localization of hpl-2 to gene bodies. Interacts with histone H1 his-24, probably via interaction with hpl-1. Interacts with chromobox protein homolog hpl-1. May form homodimers. Interacts (via chromo (shadow subtype) domain) with zinc finger protein lin-13 (via PLVPV motif); the interaction is direct and influences localization of hpl-2 to nuclear foci.

The protein localises to the nucleus. It localises to the chromosome. Functionally, seems to be involved in transcriptional silencing in heterochromatin-like complexes. Probably does not act as global transcriptional repressor, instead targeting a subset of genes. Involved in RNA processing mediated by Tar DNA-binding protein homolog tdp-1. Plays a role in linking epigenetic regulation with the innate immune response. Involved in the endoplasmic reticulum (ER) stress response via modulation of the unfolded protein response (UPR), acting mainly through the IRE1-XBP1 pathway and perhaps, to a lesser extent, through the autophagy pathway. May act in a common pathway with retinoblastoma-like protein homolog lin-35 and zinc finger protein lin-13 to influence the ER stress response in the intestine. Plays a role in the formation of the vulva and in fertility, acting together with a CoREST-like complex, and chromobox protein homolog hpl-1. Acting in concert with hpl-1 and histone H1 protein his-24, involved in reproduction, somatic gonad development, male tail development and vulval cell fate specification; perhaps as a result of modulating expression of Hox genes mab-5 and egl-5. In vulval cell fate specification may act by repressing transcription, of EGF family gene lin-3 in hypodermal hyp7, and of homeobox lin-39 in vulval precursor cells (VPC). Role in growth and somatic gonad development is antagonized by histone-lysine N-methyltransferase set-2/SET1. Required for larval development, acting redundantly with hpl-1. Plays a role in regulation of the developmentally arrested larval state known as dauer, longevity, and lipid metabolism. The sequence is that of Chromobox protein homolog hpl-2 from Caenorhabditis elegans.